The sequence spans 683 residues: Transcription factor SFP1 (683 aa).

6 disordered regions span residues 156–178, 305–324, 332–357, 399–420, 498–517, and 535–573; these read ATNT…PYHR, DSNS…NIIQ, VNHT…TANP, SNSP…NSGI, HNSM…YNTF, and IDDI…NNYK. Positions 160-173 are enriched in polar residues; that stretch reads LQIQQPTKRPSVSN. Positions 230–458 are prion domain (PrD); it reads NTTNMSQIPM…NYSLNKTSRN (229 aa). Residues 535–557 show a composition bias toward acidic residues; the sequence is IDDIDDDDDVDDDDDDDDDDDTE. Residues 558–573 are compositionally biased toward polar residues; that stretch reads NGSSSNGKSVHNNNYK. 2 consecutive C2H2-type zinc fingers follow at residues 598-623 and 659-683; these read FKCP…LHGH and YRCE…HSTH.

As to quaternary structure, interacts with the target of rapamycin complex 1 (TORC1) in a rapamycin-dependent manner. Interacts with MRS6. Post-translationally, phosphorylated by TORC1 kinase at multiple sites. Phosphorylation regulates nuclear localization and RP promoter binding.

It is found in the cytoplasm. The protein localises to the nucleus. Its function is as follows. Transcription factor that regulates ribosomal protein (RP) and ribosome biogenesis (Ribi) gene expression in response to nutrients and stress. Promotes RP gene expression under optimal growth conditions. Leaves the nucleus upon environmental challenges, resulting in a down-regulation of RP gene transcription. The effect of the environmental cues on SFP1 localization is mediated through the TOR pathway. Also regulates the expression of genes involved in the G2/M transition during the mitotic cell cycle and the DNA-damage response. Required for carbon-source modulation of cell size. This is Transcription factor SFP1 (SFP1) from Saccharomyces cerevisiae (strain ATCC 204508 / S288c) (Baker's yeast).